A 445-amino-acid chain; its full sequence is UDP-N-acetylmuramoylalanine--D-glutamate ligase (445 aa).

Residue 111 to 117 (GTNGKST) participates in ATP binding.

Belongs to the MurCDEF family.

It localises to the cytoplasm. It carries out the reaction UDP-N-acetyl-alpha-D-muramoyl-L-alanine + D-glutamate + ATP = UDP-N-acetyl-alpha-D-muramoyl-L-alanyl-D-glutamate + ADP + phosphate + H(+). Its pathway is cell wall biogenesis; peptidoglycan biosynthesis. Functionally, cell wall formation. Catalyzes the addition of glutamate to the nucleotide precursor UDP-N-acetylmuramoyl-L-alanine (UMA). The chain is UDP-N-acetylmuramoylalanine--D-glutamate ligase (murD) from Rickettsia prowazekii (strain Madrid E).